The sequence spans 325 residues: Neisseria adhesin A (325 aa).

A signal peptide spans 1 to 23; the sequence is MKHFQSKVLTAAILAALSGSAMA. The segment at 24 to 137 is head domain; sequence DNPPPSTDEI…NTAAIGENKA (114 aa). The stretch at 86–135 forms a coiled coil; sequence LKEVLAQHDQSLADLTGTVDENSEALVKTAEVVNDISADVKANTAAIGEN. Residues 139-231 form a coiled stalk domain region; the sequence is IAKKADQTAL…LASAEKSITE (93 aa). Residues 232–270 form an outer membrane translocation of the passenger domain region; that stretch reads HGTRLNGLDRTVSDLRKETRQGLAEQAALSGLFQPYNVG. The next 4 beta stranded transmembrane spans lie at 270-280, 284-295, 302-308, and 314-325; these read GRFNVTAAVGG, ESAVAIGTGFRF, KAGVAVG, and SAAYHVGVNYEW. Residues 271 to 325 are translocator domain; it reads RFNVTAAVGGYKSESAVAIGTGFRFTENFAAKAGVAVGTSSGSSAAYHVGVNYEW.

This sequence belongs to the autotransporter-2 (AT-2) (TC 1.B.40) family. In terms of assembly, homotrimer.

The protein localises to the cell surface. It localises to the cell outer membrane. Functionally, an antigenic bacterial cell surface protein that adheres to and induces bacterial uptake by human epithelial cells. In Neisseria meningitidis serogroup B, this protein is Neisseria adhesin A.